The sequence spans 641 residues: Putative phagocytic receptor 1a (641 aa).

A signal peptide spans 1 to 23 (MKINKKQIVFFILFSIFLNHVNG). Residues 24 to 279 (IFYLPGMIPH…ESNDNSVHWF (256 aa)) are Extracellular-facing. The helical transmembrane segment at 280 to 300 (SILNSLMIVFILTVMVAMIII) threads the bilayer. The Cytoplasmic portion of the chain corresponds to 301-349 (RTLKKDIRRYTSIDTSEDRDSQEETGWKMIHGDVFRPPSHPMLLSVCIG). A helical transmembrane segment spans residues 350–370 (SGVQIFSMTLITMIFAVLGFL). The Extracellular segment spans residues 371–374 (SPAN). Residues 375–395 (IGGLATALIVLFVLSAMFAGY) form a helical membrane-spanning segment. Residues 396–413 (FSTRVFTIFKGRNWKKNT) are Cytoplasmic-facing. The chain crosses the membrane as a helical span at residues 414-434 (IYTALSMPGIIFGIFFFVNMF). The Extracellular portion of the chain corresponds to 435-445 (LRGAKSSAAVP). The chain crosses the membrane as a helical span at residues 446-466 (FGTFASIIAMWFGISVPLVFL). Topologically, residues 467-502 (GSYFASKKPVPEDPVRTNQIPRQVPDQIWYMNPYLS) are cytoplasmic. Residues 503–523 (ILMGGILPFGAVFIELHFILT) traverse the membrane as a helical segment. The Extracellular segment spans residues 524 to 532 (SLWDNQFYY). Residues 533 to 553 (IFGFLFIVLMILIVTSAEISI) traverse the membrane as a helical segment. Topologically, residues 554–578 (VMCYFQLCAEDHHWWWRSFLTAGSS) are cytoplasmic. The helical transmembrane segment at 579–599 (SLYMFIYSVSFFRYLGITKFI) threads the bilayer. Over 600 to 608 (SSLLDFSYS) the chain is Extracellular. Residues 609–629 (FIMSLAFAALTGTIGFYSCYF) traverse the membrane as a helical segment. The Cytoplasmic portion of the chain corresponds to 630–641 (LVRKIYSSIHIN).

Belongs to the nonaspanin (TM9SF) (TC 9.A.2) family.

It is found in the membrane. Involved in adhesion, phagocytosis of hydrophilic particles and intracellular killing of bacteria. Associates with proteins harboring glycine-rich transmembrane domains and ensures their efficient localization to the cell surface. The chain is Putative phagocytic receptor 1a (phg1a) from Dictyostelium discoideum (Social amoeba).